Consider the following 81-residue polypeptide: 8.6 kDa transglutaminase substrate (81 aa).

In terms of assembly, multimeric. In terms of tissue distribution, hemolymph; Hemocyte.

The polypeptide is 8.6 kDa transglutaminase substrate (Tachypleus tridentatus (Japanese horseshoe crab)).